The chain runs to 766 residues: Single-minded homolog 1 (766 aa).

In terms of domain architecture, bHLH spans 1–53 (MKEKSKNAARTRREKENSEFYELAKLLPLPSAITSQLDKASIIRLTTSYLKMR). 2 PAS domains span residues 77–147 (GREL…QPYH) and 218–288 (PPSA…LVKG). The PAC domain maps to 292–335 (TKYYRFLAKHGGWVWVQSYATIVHNSRSSRPHCIVSVNYVLTDT). In terms of domain architecture, Single-minded C-terminal spans 336–766 (EYKGLQLSLD…GTSVIITNGS (431 aa)). Over residues 353-365 (AFSYTSSSTPTMT) the composition is skewed to polar residues. Disordered stretches follow at residues 353–431 (AFSY…SQHD) and 528–563 (WDED…EPSK). The Nuclear localization signal signature appears at 368 to 387 (RKGAKSRLSSSKSKSRTSPY). Positions 373 to 385 (SRLSSSKSKSRTS) are enriched in low complexity. Basic and acidic residues predominate over residues 394-404 (HTERSESDHDS).

As to quaternary structure, efficient DNA binding requires dimerization with another bHLH protein. Heterodimer; forms a heterodimer with ARNT, ARNT2.

Its subcellular location is the nucleus. Its function is as follows. Transcriptional factor that may have pleiotropic effects during embryogenesis and in the adult. This is Single-minded homolog 1 (SIM1) from Pan paniscus (Pygmy chimpanzee).